A 150-amino-acid chain; its full sequence is MSKPKAKKIFLGVDYGQRRIGLAYAASPLFISLPIGFIEAGKTLEATAQSLAKIILEREVSCVVLGNPIPMQIGQKSSLQEEILKISSLIQEFCHVDVVLWDERLSSAQAERMLKCDCGLSRKQRKGKTDSVAATLILTNFLESSPSIRF.

It belongs to the YqgF nuclease family.

It localises to the cytoplasm. Its function is as follows. Could be a nuclease involved in processing of the 5'-end of pre-16S rRNA. The sequence is that of Putative pre-16S rRNA nuclease from Chlamydia felis (strain Fe/C-56) (Chlamydophila felis).